A 280-amino-acid chain; its full sequence is ESX-1 secretion-associated protein EspJ (280 aa).

At Ser70 the chain carries Phosphoserine. Low complexity-rich tracts occupy residues 167 to 181 and 246 to 280; these read QTISQTAQQAAQSAQ and PAQAMDTGAGARPAASPLAAPVDPSTPAPSTTTTL. The segment at 167 to 280 is disordered; the sequence is QTISQTAQQA…TPAPSTTTTL (114 aa).

Post-translationally, phosphorylated at Ser-70.

The protein localises to the secreted. In terms of biological role, could be involved in regulation of growth and intracellular survival. The sequence is that of ESX-1 secretion-associated protein EspJ from Mycobacterium tuberculosis (strain CDC 1551 / Oshkosh).